The primary structure comprises 513 residues: Cytochrome P450 94A2 (513 aa).

Residues 7-24 form a helical membrane-spanning segment; the sequence is ISWLLFSTSLFWFLFLAT. C455 is a binding site for heme.

It belongs to the cytochrome P450 family. It depends on heme as a cofactor. As to expression, weakly expressed in seedlings.

Its subcellular location is the endoplasmic reticulum membrane. Catalyzes the omega-hydroxylation of various fatty acids (FA). The substrate specificity is higher for myristate &gt; laurate = palmitate (C14&gt;C16=C12). This chain is Cytochrome P450 94A2 (CYP94A2), found in Vicia sativa (Spring vetch).